Reading from the N-terminus, the 363-residue chain is Inositol-3-phosphate synthase (363 aa).

NAD(+)-binding residues include aspartate 68, alanine 127, tyrosine 147, serine 190, aspartate 225, and lysine 238.

This sequence belongs to the myo-inositol 1-phosphate synthase family. As to quaternary structure, monomer. Requires NAD(+) as cofactor.

The enzyme catalyses D-glucose 6-phosphate = 1D-myo-inositol 3-phosphate. It functions in the pathway polyol metabolism; myo-inositol biosynthesis; myo-inositol from D-glucose 6-phosphate: step 1/2. In terms of biological role, key enzyme in myo-inositol biosynthesis pathway that catalyzes the conversion of glucose 6-phosphate to 1D-myo-inositol 3-phosphate in a NAD-dependent manner. Plays a key role in oxidative stress resistance as its product is the precursor of the protective antioxidant mycothiol (MSH or AcCys-GlcN-Ins). The polypeptide is Inositol-3-phosphate synthase (Corynebacterium glutamicum (strain ATCC 13032 / DSM 20300 / JCM 1318 / BCRC 11384 / CCUG 27702 / LMG 3730 / NBRC 12168 / NCIMB 10025 / NRRL B-2784 / 534)).